Here is a 555-residue protein sequence, read N- to C-terminus: MRTAMSCGGGLVQRLDFSSSDEEDGLSNGINEGPQKGSPVSSWRTNNCPFPITPQRNERELSPTQELSPSSDYSPDPSVGAECPGTPLHYSTWKKLKLCDTPYTPKSLLYKTLPSPGSRVHCRGQRLLRFVAGTGAELDDPSLVNINPFTPESYRQTHFQPNGKRKERPEDDCRTDRQMKYAEKEHPAVFQSKRFVLRETNMGSRYKTEFLEIEKIGAGEFGSVFKCIKRLDGCFYAIKRSKKPLAGSTDEQLALREVYAHAVLGHHPHVVRYYSAWAEDDHMIIQNEYCNGGSLQDLIVDNNKEGQFVLEQELKEILLQVSMGLKYIHGSGLVHMDIKPSNIFICRKQTELGQEESDGEDDLSSGSVLYKIGDLGHVTSILNPQVEEGDSRFLANEILQEDYSQLPKADIFALGLTIALAAGAAPLPCNEDSWHHIRKGNLPHVPQLLTPIFLALLKLLVHPDPVMRPPAASLAKNSVLRRCVGKAAQLQKQLNVEKFKTAMLERELKAAKLAQTSGKDECSDLPPMSGFSCRGRKRLVGAKNTRSLSFTCGGY.

Disordered stretches follow at residues 1 to 81 (MRTA…SVGA) and 149 to 175 (FTPESYRQTHFQPNGKRKERPEDDCRT). Residues 38–48 (SPVSSWRTNNC) show a composition bias toward polar residues. The segment covering 68–78 (SPSSDYSPDPS) has biased composition (low complexity). A compositionally biased stretch (polar residues) spans 149 to 160 (FTPESYRQTHFQ). The Protein kinase domain maps to 210-480 (FLEIEKIGAG…AASLAKNSVL (271 aa)). Residues 216-224 (IGAGEFGSV) and K239 contribute to the ATP site. The active-site Proton acceptor is the D337. Residues N342 and D374 each contribute to the Mg(2+) site. Positions 487 to 513 (AAQLQKQLNVEKFKTAMLERELKAAKL) form a coiled coil. Residue S549 is modified to Phosphoserine.

Belongs to the protein kinase superfamily. Ser/Thr protein kinase family. WEE1 subfamily. Interacts with prmt5; this promotes protesomal degradation of wee2-a in the nucleus. The interaction with prmt5 is disrupted upon activation of the DNA replication checkpoint. Subject to proteasomal degradation in the nucleus. In terms of tissue distribution, detected in egg (at protein level). Oocyte-specific maternally supplied protein. Present in immature and mature oocytes and in early (pregastrula) embryos, but not in post-gastrula embryos.

It is found in the nucleus. It localises to the cytoplasm. The protein resides in the cytosol. The enzyme catalyses L-tyrosyl-[protein] + ATP = O-phospho-L-tyrosyl-[protein] + ADP + H(+). Its function is as follows. Oocyte-specific protein tyrosine kinase that phosphorylates and inhibits cdk1 and acts as a key regulator of meiosis. Required to maintain meiotic arrest in oocytes by phosphorylating cdk1 at 'Tyr-15', which inhibits cdk1 activity and prevents meiotic reentry. Negative regulator of mitosis. Involved in the mitotic DNA replication checkpoint. This Xenopus laevis (African clawed frog) protein is Wee1-like protein kinase 2-A (wee2-a).